The following is a 366-amino-acid chain: Autophagy-related protein 18b (366 aa).

WD repeat units lie at residues 6 to 44 (SLPS…LCYE), 178 to 218 (AHRS…KSYS), and 223 to 265 (TYPS…NQRS).

Belongs to the WD repeat PROPPIN family. As to quaternary structure, component of the PI(3,5)P2 regulatory complex at least composed of ATG18, SAC/FIG4, FAB1 and VAC14. Expressed in roots, stems, flowers and leaves.

The protein localises to the preautophagosomal structure membrane. Its subcellular location is the vacuole membrane. Its function is as follows. The PI(3,5)P2 regulatory complex regulates both the synthesis and turnover of phosphatidylinositol 3,5-bisphosphate (PtdIns(3,5)P2). Required for autophagy. The chain is Autophagy-related protein 18b (ATG18B) from Arabidopsis thaliana (Mouse-ear cress).